The following is a 463-amino-acid chain: Endoglucanase EG-1 (463 aa).

A signal peptide spans 1–22 (MAPSATLPLTTAILAIGRLVAA). Residues 23 to 397 (QQPGTSTPEV…DIGSTTNSTG (375 aa)) are catalytic. 4 N-linked (GlcNAc...) asparagine glycosylation sites follow: Asn78, Asn164, Asn204, and Asn208. The active-site Nucleophile is Glu218. Glu223 functions as the Proton donor in the catalytic mechanism. Residues 390-429 (GSTTNSTGGNPPPPPPPASSTTFSTTRRSSTTSSSPSCTQ) form a disordered region. Asn394 is a glycosylation site (N-linked (GlcNAc...) asparagine). The segment at 402–427 (PPPPPASSTTFSTTRRSSTTSSSPSC) is linker. The span at 408–429 (SSTTFSTTRRSSTTSSSPSCTQ) shows a compositional bias: low complexity. The CBM1 domain maps to 427–463 (CTQTHWGQCGGIGYTGCKTCTSGTTCQYGNDYYSQCL). 2 disulfides stabilise this stretch: Cys435/Cys452 and Cys446/Cys462.

The protein belongs to the glycosyl hydrolase 7 (cellulase C) family.

It is found in the secreted. The catalysed reaction is Endohydrolysis of (1-&gt;4)-beta-D-glucosidic linkages in cellulose, lichenin and cereal beta-D-glucans.. Functionally, the biological conversion of cellulose to glucose generally requires three types of hydrolytic enzymes: (1) Endoglucanases which cut internal beta-1,4-glucosidic bonds; (2) Exocellobiohydrolases that cut the disaccharide cellobiose from the non-reducing end of the cellulose polymer chain; (3) Beta-1,4-glucosidases which hydrolyze the cellobiose and other short cello-oligosaccharides to glucose. The protein is Endoglucanase EG-1 (egl1) of Trichoderma longibrachiatum.